A 174-amino-acid chain; its full sequence is Dual-action ribosomal maturation protein DarP (174 aa).

Belongs to the DarP family.

It localises to the cytoplasm. Functionally, member of a network of 50S ribosomal subunit biogenesis factors which assembles along the 30S-50S interface, preventing incorrect 23S rRNA structures from forming. Promotes peptidyl transferase center (PTC) maturation. The protein is Dual-action ribosomal maturation protein DarP of Vibrio campbellii (strain ATCC BAA-1116).